The following is a 720-amino-acid chain: Cyclic nucleotide-gated ion channel 17 (720 aa).

Residues 1–85 (MELRKDKLLM…SEIVLKWNWV (85 aa)) lie on the Cytoplasmic side of the membrane. A helical transmembrane segment spans residues 86–106 (FIVSCMVALFIDPLYFFVPAI). The Extracellular portion of the chain corresponds to 107 to 121 (GGDKNYPCARTDTSL). The helical transmembrane segment at 122–142 (SILVTFFRTIADLFYLLHIFI) threads the bilayer. Over 143 to 178 (KFRTGFIAPNSSTRVFGRGELVMDPKAIAWRYIKSD) the chain is Cytoplasmic. The chain crosses the membrane as a helical span at residues 179–199 (FIIDLIATLPLPQIVIWFVIS). Residues 200–211 (TTKSYRFDHNNN) are Extracellular-facing. Residues 212–232 (AIALIVLLQYIPRFYLIIPLS) form a helical membrane-spanning segment. Residues 233-252 (SQIVKATGVVTKTAWAGAAY) lie on the Cytoplasmic side of the membrane. The helical transmembrane segment at 253 to 273 (NLLLYMLASHVLGAAWYILSV) threads the bilayer. Topologically, residues 274-377 (DRYTSCWKSR…LSTTMFMGET (104 aa)) are extracellular. A helical transmembrane segment spans residues 378 to 398 (TFAVLIAIFGLVLFAHLIGNM). The Cytoplasmic segment spans residues 399-720 (QTYLQSLTVR…EPDFSAEHDD (322 aa)). A nucleoside 3',5'-cyclic phosphate is bound by residues 481–605 (FFSQ…SKKL) and Glu552. The segment at 597–612 (FRRLHSKKLQHTFRFY) is calmodulin-binding. In terms of domain architecture, IQ spans 617-646 (RTWAACFIQAAWRRYKRRVMENNLTAIESM).

It belongs to the cyclic nucleotide-gated cation channel (TC 1.A.1.5) family. Homotetramer or heterotetramer. Part of a functional complex containing PSKR1, BAK1, CNGC17, and AHA. Interacts with AHA1, AHA2, and BAK1, but not with PSKR1 or BRI1.

The protein localises to the cell membrane. Probable cyclic nucleotide-gated ion channel. Forms a functional cation-translocating unit with AHAs that is activated by PSKR1/BAK1 and possibly other BAK1/RLK complexes. Required for PSK-induced protoplast expansion. The polypeptide is Cyclic nucleotide-gated ion channel 17 (Arabidopsis thaliana (Mouse-ear cress)).